Consider the following 240-residue polypeptide: Ribosomal RNA large subunit methyltransferase E (240 aa).

The tract at residues 1 to 28 (MSSSPRSPDARPLKVRVKSARTRSSSSQ) is disordered. Gly-80, Trp-82, Asp-103, Asp-119, and Asp-143 together coordinate S-adenosyl-L-methionine. Catalysis depends on Lys-183, which acts as the Proton acceptor.

It belongs to the class I-like SAM-binding methyltransferase superfamily. RNA methyltransferase RlmE family.

The protein resides in the cytoplasm. The enzyme catalyses uridine(2552) in 23S rRNA + S-adenosyl-L-methionine = 2'-O-methyluridine(2552) in 23S rRNA + S-adenosyl-L-homocysteine + H(+). Functionally, specifically methylates the uridine in position 2552 of 23S rRNA at the 2'-O position of the ribose in the fully assembled 50S ribosomal subunit. The polypeptide is Ribosomal RNA large subunit methyltransferase E (Azorhizobium caulinodans (strain ATCC 43989 / DSM 5975 / JCM 20966 / LMG 6465 / NBRC 14845 / NCIMB 13405 / ORS 571)).